The chain runs to 324 residues: Hydroxyacylglutathione hydrolase 2, mitochondrial (324 aa).

The transit peptide at 1–64 (MQTISKASSA…KSIRVSKFCS (64 aa)) directs the protein to the mitochondrion. Zn(2+) is bound by residues His124 and His126. Fe cation contacts are provided by Asp128 and His129. 2 residues coordinate Zn(2+): His182 and Asp201. Fe cation contacts are provided by Asp201 and His239.

This sequence belongs to the metallo-beta-lactamase superfamily. Glyoxalase II family. Monomer. The cofactor is Fe(3+). Requires Fe(2+) as cofactor. Zn(2+) serves as cofactor.

It is found in the mitochondrion. It catalyses the reaction an S-(2-hydroxyacyl)glutathione + H2O = a 2-hydroxy carboxylate + glutathione + H(+). The protein operates within secondary metabolite metabolism; methylglyoxal degradation; (R)-lactate from methylglyoxal: step 2/2. Its function is as follows. Thiolesterase that catalyzes the hydrolysis of S-D-lactoyl-glutathione to form glutathione and D-lactic acid. This is Hydroxyacylglutathione hydrolase 2, mitochondrial from Arabidopsis thaliana (Mouse-ear cress).